A 217-amino-acid polypeptide reads, in one-letter code: uncharacterized protein (217 aa).

4 consecutive transmembrane segments (helical) span residues 9–29, 54–74, 103–125, and 135–157; these read ISLASSVVATTVLVAPVLSTI, FLSTIIGAGYPIYKTYLLLEL, LMAYWCVYGCVTAAESILGRFLS, and IVFWLWLLNPRTQGAAFIYASYI.

Belongs to the DP1 family.

It is found in the endoplasmic reticulum membrane. This is an uncharacterized protein from Schizosaccharomyces pombe (strain 972 / ATCC 24843) (Fission yeast).